We begin with the raw amino-acid sequence, 147 residues long: Prefoldin subunit alpha (147 aa).

This sequence belongs to the prefoldin alpha subunit family. In terms of assembly, heterohexamer of two alpha and four beta subunits.

The protein resides in the cytoplasm. Its function is as follows. Molecular chaperone capable of stabilizing a range of proteins. Seems to fulfill an ATP-independent, HSP70-like function in archaeal de novo protein folding. This is Prefoldin subunit alpha from Methanocorpusculum labreanum (strain ATCC 43576 / DSM 4855 / Z).